The sequence spans 679 residues: Genome polyprotein (679 aa).

A propeptide spans 1-14 (SAGMIIMLIPTVMA) (ER anchor for the capsid protein C, removed in mature form by serine protease NS3). A helical membrane pass occupies residues 2-22 (AGMIIMLIPTVMAFHLTTRNG). The Extracellular portion of the chain corresponds to 23 to 138 (EPHMIVSRQE…GAWKHAQRIE (116 aa)). N-linked (GlcNAc...) asparagine; by host glycosylation occurs at Asn-83. The chain crosses the membrane as a helical span at residues 139-159 (IWILRHPGFTIMAAILAYTIG). Topologically, residues 160-165 (TTHFQR) are cytoplasmic. Residues 166-180 (ALIFILLTAVAPSMT) traverse the membrane as a helical segment. Residues 181 to 625 (MRCIGISNRD…LHQVFGAIYG (445 aa)) lie on the Extracellular side of the membrane. 4 disulfide bridges follow: Cys-183/Cys-210, Cys-240/Cys-301, Cys-254/Cys-285, and Cys-272/Cys-296. A glycan (N-linked (GlcNAc...) asparagine; by host) is linked at Asn-247. The tract at residues 278–291 (DRGWGNGCGLFGKG) is fusion peptide. Asn-333 carries an N-linked (GlcNAc...) asparagine; by host glycan. 2 cysteine pairs are disulfide-bonded: Cys-365/Cys-465 and Cys-482/Cys-513. A helical membrane pass occupies residues 626 to 646 (AAFSGVSWTMKILIGVIITWI). The Cytoplasmic portion of the chain corresponds to 647–652 (GMNSRS). A helical transmembrane segment spans residues 653-673 (TSLSVSLVLVGIVTLYLGVMV). Residues 674–679 (QADSGC) lie on the Extracellular side of the membrane.

Forms heterodimers with envelope protein E in the endoplasmic reticulum and Golgi. As to quaternary structure, homodimer; in the endoplasmic reticulum and Golgi. Interacts with protein prM. Interacts with non-structural protein 1. Post-translationally, cleaved in post-Golgi vesicles by a host furin, releasing the mature small envelope protein M, and peptide pr. This cleavage is incomplete as up to 30% of viral particles still carry uncleaved prM. N-glycosylated. In terms of processing, N-glycosylated. The excreted form is glycosylated and this is required for efficient secretion of the protein from infected cells. Post-translationally, specific enzymatic cleavages in vivo yield mature proteins. Cleavages in the lumen of endoplasmic reticulum are performed by host signal peptidase, wereas cleavages in the cytoplasmic side are performed by serine protease NS3. Signal cleavage at the 2K-4B site requires a prior NS3 protease-mediated cleavage at the 4A-2K site.

Its subcellular location is the secreted. The protein localises to the virion membrane. It localises to the host endoplasmic reticulum membrane. Functionally, prevents premature fusion activity of envelope proteins in trans-Golgi by binding to envelope protein E at pH6.0. After virion release in extracellular space, gets dissociated from E dimers. Acts as a chaperone for envelope protein E during intracellular virion assembly by masking and inactivating envelope protein E fusion peptide. prM is the only viral peptide matured by host furin in the trans-Golgi network probably to avoid catastrophic activation of the viral fusion activity in acidic Golgi compartment prior to virion release. prM-E cleavage is inefficient, and many virions are only partially matured. These uncleaved prM would play a role in immune evasion. In terms of biological role, may play a role in virus budding. Exerts cytotoxic effects by activating a mitochondrial apoptotic pathway through M ectodomain. May display a viroporin activity. Its function is as follows. Binds to host cell surface receptor and mediates fusion between viral and cellular membranes. Envelope protein is synthesized in the endoplasmic reticulum in the form of heterodimer with protein prM. They play a role in virion budding in the ER, and the newly formed immature particle is covered with 60 spikes composed of heterodimer between precursor prM and envelope protein E. The virion is transported to the Golgi apparatus where the low pH causes dissociation of PrM-E heterodimers and formation of E homodimers. prM-E cleavage is inefficient, and many virions are only partially matured. These uncleaved prM would play a role in immune evasion. Functionally, involved in immune evasion, pathogenesis and viral replication. Once cleaved off the polyprotein, is targeted to three destinations: the viral replication cycle, the plasma membrane and the extracellular compartment. Essential for viral replication. Required for formation of the replication complex and recruitment of other non-structural proteins to the ER-derived membrane structures. Excreted as a hexameric lipoparticle that plays a role against host immune response. Antagonizing the complement function. Binds to the host macrophages and dendritic cells. Inhibits signal transduction originating from Toll-like receptor 3 (TLR3). Disrupts the host endothelial glycocalyx layer of host pulmonary microvascular endothelial cells, inducing degradation of sialic acid and shedding of heparan sulfate proteoglycans. NS1 induces expression of sialidases, heparanase, and activates cathepsin L, which activates heparanase via enzymatic cleavage. These effects are probably linked to the endothelial hyperpermeability observed in severe dengue disease. This Dengue virus type 2 (strain Thailand/PUO-218/1980) (DENV-2) protein is Genome polyprotein.